Here is a 178-residue protein sequence, read N- to C-terminus: ATP-dependent protease subunit HslV (178 aa).

Threonine 7 is a catalytic residue. Positions 162, 165, and 168 each coordinate Na(+).

The protein belongs to the peptidase T1B family. HslV subfamily. As to quaternary structure, a double ring-shaped homohexamer of HslV is capped on each side by a ring-shaped HslU homohexamer. The assembly of the HslU/HslV complex is dependent on binding of ATP.

Its subcellular location is the cytoplasm. The enzyme catalyses ATP-dependent cleavage of peptide bonds with broad specificity.. Its activity is regulated as follows. Allosterically activated by HslU binding. Functionally, protease subunit of a proteasome-like degradation complex believed to be a general protein degrading machinery. This chain is ATP-dependent protease subunit HslV, found in Ralstonia nicotianae (strain ATCC BAA-1114 / GMI1000) (Ralstonia solanacearum).